The following is a 445-amino-acid chain: Asparagine--tRNA ligase (445 aa).

The protein belongs to the class-II aminoacyl-tRNA synthetase family. As to quaternary structure, homodimer.

It is found in the cytoplasm. It carries out the reaction tRNA(Asn) + L-asparagine + ATP = L-asparaginyl-tRNA(Asn) + AMP + diphosphate + H(+). This chain is Asparagine--tRNA ligase, found in Deinococcus deserti (strain DSM 17065 / CIP 109153 / LMG 22923 / VCD115).